A 720-amino-acid polypeptide reads, in one-letter code: Polyribonucleotide nucleotidyltransferase (720 aa).

Residues Asp487 and Asp493 each coordinate Mg(2+). Residues 554–613 (PRIETFKIPTDKIREVIGTGGKVIREIVEKTGAKINIEDDGTVKVASNDGEAMKAAIKWI) enclose the KH domain. Residues 623 to 691 (GQIYEGTVVK…DRGKTRLSMK (69 aa)) form the S1 motif domain. Positions 691–720 (KAVDQQTGEDLEAAGHKAEKADAPREAAGE) are disordered. Basic and acidic residues predominate over residues 703–720 (AAGHKAEKADAPREAAGE).

The protein belongs to the polyribonucleotide nucleotidyltransferase family. The cofactor is Mg(2+).

The protein localises to the cytoplasm. The enzyme catalyses RNA(n+1) + phosphate = RNA(n) + a ribonucleoside 5'-diphosphate. In terms of biological role, involved in mRNA degradation. Catalyzes the phosphorolysis of single-stranded polyribonucleotides processively in the 3'- to 5'-direction. The polypeptide is Polyribonucleotide nucleotidyltransferase (Nitrobacter hamburgensis (strain DSM 10229 / NCIMB 13809 / X14)).